Reading from the N-terminus, the 238-residue chain is Lipoarabinomannan carrier protein LprG (238 aa).

The signal sequence occupies residues 1-26; the sequence is MQAPKHHRRLFAVLATLNTATAVIAG. The N-palmitoyl cysteine moiety is linked to residue C27. C27 carries S-diacylglycerol cysteine lipidation.

It belongs to the LppX/LprAFG lipoprotein family. In terms of processing, modified by Lgt on Cys-27 with an S-linked diacylglyceral, signal peptide is removed by LspA, Cys-27 is further modifed with a fatty acid on its amino group by Lnt yielding a triacylated protein. Probably glycosylated, which is required for T-cell activation.

The protein localises to the cell inner membrane. Its subcellular location is the secreted. It localises to the cell wall. Functionally, helps membrane protein ML0556 (P55) transport triacylglycerides (TAG) across the inner cell membrane into the periplasm and probably ultimately to the outer membrane. Binds TAG in its hydrophobic cavity and transfers it between lipid bilayers. TAG probably regulates lipid metabolism and growth regulation and plays a structural role in the outer membrane. Binds di- and triacylated phosphatidyl-myo-inositol mannosides (PIMs), and glycolipid lipoglycan modulins lipoarabinomannan (LAM) and lipomannan (LM), facilitating their recognition by TLR2. Required for activity of drug efflux transporter ML0556. Required, probably with ML0556, for normal surface localization of LAM. Constitutes a host TLR2 agonist (toll-like receptor) able to stimulate proliferation of CD4+ T-cells derived from a human leprosy patient following protein processing/presentation by MHC class II molecules in peripheral blood mononuclear cells. This Mycobacterium leprae (strain TN) protein is Lipoarabinomannan carrier protein LprG.